We begin with the raw amino-acid sequence, 260 residues long: MMMHSSACDCEASLCETLRGFSAKHPDSVIYQTSLMSALLSGVYEGDTTIADLLAHGDFGLGTFNELDGEMIAFSSQVYQLRADGSARAAKPEQKTPFAVMTWFQPQYRKTFDAPVSRQQIHDVIDQQIPSDNLFCALRIDGNFRHAHTRTVPRQTPPYRAMTDVLDDQPVFRFNQREGVLVGFRTPQHMQGINVAGYHEHFITDDRQGGGHLLDYQLESGVLTFGEIHKLMIDLPADSAFLQANLHPSNLDAAIRSVEN.

It belongs to the alpha-acetolactate decarboxylase family.

It carries out the reaction (2S)-2-acetolactate + H(+) = (R)-acetoin + CO2. It functions in the pathway polyol metabolism; (R,R)-butane-2,3-diol biosynthesis; (R,R)-butane-2,3-diol from pyruvate: step 2/3. Functionally, converts acetolactate into acetoin, which can be excreted by the cells. This may be a mechanism for controlling the internal pH of cells in the stationary stage. The sequence is that of Alpha-acetolactate decarboxylase (budA) from Klebsiella aerogenes (Enterobacter aerogenes).